Here is a 760-residue protein sequence, read N- to C-terminus: Formin-like protein 8 (760 aa).

The N-terminal stretch at 1-29 (MAAMFNHPWPNLTLIYFFFIVVLPFQSLS) is a signal peptide. Positions 52–63 (PLLPPSSNPSPP) are enriched in pro residues. The disordered stretch occupies residues 52 to 71 (PLLPPSSNPSPPSNNSSSSD). A helical transmembrane segment spans residues 78–98 (AVLITAASTLLVAGVFFFCLQ). The disordered stretch occupies residues 204–313 (TEIPLLRGRS…VKLKPLHWDK (110 aa)). Residues 253-274 (TPSPPPPIKKGSSPSPPPPPPV) show a composition bias toward pro residues. Positions 296-732 (SGGETSKQVK…GSPISPSSQR (437 aa)) constitute an FH2 domain.

It belongs to the formin-like family. Class-I subfamily. In terms of assembly, interacts with profilin.

The protein resides in the cell membrane. Might be involved in the organization and polarity of the actin cytoskeleton. Interacts with the barbed end of actin filaments and nucleates actin-filament polymerization in vitro. The sequence is that of Formin-like protein 8 (FH8) from Arabidopsis thaliana (Mouse-ear cress).